The following is a 738-amino-acid chain: Melanotransferrin (738 aa).

The N-terminal stretch at 1–19 (MRLLSVTFWLLLSLRTVVC) is a signal peptide. Transferrin-like domains lie at 23–357 (VQWC…GLLC) and 366–706 (LRWC…GMLS). 2 cysteine pairs are disulfide-bonded: Cys-26–Cys-63 and Cys-36–Cys-54. Fe(3+) is bound by residues Asp-78 and Tyr-107. Asn-118 carries N-linked (GlcNAc...) asparagine glycosylation. Disulfide bonds link Cys-130–Cys-216, Cys-172–Cys-189, Cys-186–Cys-199, and Cys-257–Cys-271. Position 132 (Thr-132) interacts with hydrogencarbonate. Asn-135 carries an N-linked (GlcNAc...) asparagine glycan. Residues Arg-136, Val-138, and Gly-139 each contribute to the hydrogencarbonate site. Tyr-210 serves as a coordination point for Fe(3+). Residues His-279 and Tyr-451 each contribute to the Fe(3+) site. Ser-462 bears the Phosphoserine mark. N-linked (GlcNAc...) asparagine glycosylation is present at Asn-515. Fe(3+)-binding residues include Tyr-556 and His-625. The GPI-anchor amidated cysteine moiety is linked to residue Cys-709. The propeptide at 710 to 738 (SGAGAAVQRVPLLALLLLTLAAGLLPRVL) is removed in mature form.

It belongs to the transferrin family.

It localises to the cell membrane. In terms of biological role, involved in iron cellular uptake. Seems to be internalized and then recycled back to the cell membrane. Binds a single atom of iron per subunit. Could also bind zinc. The sequence is that of Melanotransferrin (Meltf) from Mus musculus (Mouse).